The sequence spans 519 residues: Cytochrome P450 52A13 (519 aa).

Cys466 provides a ligand contact to heme.

This sequence belongs to the cytochrome P450 family. The cofactor is heme.

It is found in the membrane. Functionally, together with an NADPH cytochrome P450 the enzyme system catalyzes the terminal hydroxylation as the first step in the assimilation of alkanes and fatty acids. The sequence is that of Cytochrome P450 52A13 (CYP52A13) from Debaryomyces hansenii (Yeast).